A 333-amino-acid chain; its full sequence is uncharacterized protein (333 aa).

The Radical SAM core domain maps to 67–274 (HFYPTTQVVS…LEMARNLAIE (208 aa)). Positions 82, 86, and 89 each coordinate [4Fe-4S] cluster.

Requires [4Fe-4S] cluster as cofactor.

This is an uncharacterized protein from Methanocaldococcus jannaschii (strain ATCC 43067 / DSM 2661 / JAL-1 / JCM 10045 / NBRC 100440) (Methanococcus jannaschii).